A 344-amino-acid chain; its full sequence is Sorting nexin-16 (344 aa).

Over residues 1-10 (MATPYVPVPM) the composition is skewed to pro residues. Residues 1–72 (MATPYVPVPM…SASSMCGSPL (72 aa)) form a disordered region. Over residues 14–26 (NSASSFTNNRNQR) the composition is skewed to polar residues. Low complexity predominate over residues 27-40 (SSSFGSVSTSSTSS). Positions 52–68 (LKQTNVQDQMDSASSMC) are enriched in polar residues. The PX domain occupies 105 to 218 (DRPSTPTILG…EFLCLDDPPG (114 aa)). A 1,2-diacyl-sn-glycero-3-phospho-(1D-myo-inositol-3-phosphate) is bound by residues Arg-144, Thr-146, and Arg-184. Phosphoserine is present on Ser-222. Residues 223 to 278 (LEESRAFCETLEETNYHLQRELLEKQKEVESLKKLLGEKQLHIDALETRIRTLSLE) are a coiled coil.

This sequence belongs to the sorting nexin family. In terms of assembly, homooligomer. Interacts with EGFR.

It is found in the early endosome membrane. Its subcellular location is the late endosome membrane. The protein resides in the cytoplasm. The protein localises to the lysosome. May be involved in several stages of intracellular trafficking. Plays a role in protein transport from early to late endosomes. Plays a role in protein transport to the lysosome. Promotes degradation of EGFR after EGF signaling. This chain is Sorting nexin-16 (Snx16), found in Mus musculus (Mouse).